Here is a 162-residue protein sequence, read N- to C-terminus: Shikimate kinase (162 aa).

Residue Gly-11–Ser-16 coordinates ATP. Ser-15 contributes to the Mg(2+) binding site. The substrate site is built by Asp-33, Arg-57, and Gly-80. Arg-116 is an ATP binding site. A substrate-binding site is contributed by Arg-132.

The protein belongs to the shikimate kinase family. Monomer. It depends on Mg(2+) as a cofactor.

It localises to the cytoplasm. It carries out the reaction shikimate + ATP = 3-phosphoshikimate + ADP + H(+). It functions in the pathway metabolic intermediate biosynthesis; chorismate biosynthesis; chorismate from D-erythrose 4-phosphate and phosphoenolpyruvate: step 5/7. Catalyzes the specific phosphorylation of the 3-hydroxyl group of shikimic acid using ATP as a cosubstrate. The protein is Shikimate kinase of Helicobacter pylori (strain J99 / ATCC 700824) (Campylobacter pylori J99).